The primary structure comprises 191 residues: Imidazoleglycerol-phosphate dehydratase (191 aa).

This sequence belongs to the imidazoleglycerol-phosphate dehydratase family.

The protein localises to the cytoplasm. It carries out the reaction D-erythro-1-(imidazol-4-yl)glycerol 3-phosphate = 3-(imidazol-4-yl)-2-oxopropyl phosphate + H2O. It functions in the pathway amino-acid biosynthesis; L-histidine biosynthesis; L-histidine from 5-phospho-alpha-D-ribose 1-diphosphate: step 6/9. This Methanosarcina barkeri (strain Fusaro / DSM 804) protein is Imidazoleglycerol-phosphate dehydratase.